Reading from the N-terminus, the 371-residue chain is MRDKIKNARRLIVKVGSALVTNNGAGLDPAALDDWARQIAALRARGREIVLVSSGAIAAGMQRLGWVKRPHEMHRLQAAAAVGQMGLVEAYEKAFSRHGLQTAQILLTHEDLADRTRYLNARSTLVTLLELGVVPIINENDTVVTDEIKFGDNDTLGALVANLVEADTLIILTDQRGLYTADPRRDPGATLISEGRAEDRQYEAMAGGAGSGISKGGMITKIRAAQRAARSGAHTCIASGRETDPLLRLADGEAVGTLLYADSTPLQARKQWLADHLQLAGSLIVDAGAARALDDGRSLLPVGVVEVQGEFKRGAAVACRDEHGTELARGLVNYSSAECRRILRRPTSDIEQLLGYIDEPELIHRDNLVIR.

K14 contacts ATP. Residues S54, D141, and N153 each contribute to the substrate site. Residue T173–D174 participates in ATP binding. The PUA domain maps to A280–I357.

This sequence belongs to the glutamate 5-kinase family.

It localises to the cytoplasm. The catalysed reaction is L-glutamate + ATP = L-glutamyl 5-phosphate + ADP. Its pathway is amino-acid biosynthesis; L-proline biosynthesis; L-glutamate 5-semialdehyde from L-glutamate: step 1/2. In terms of biological role, catalyzes the transfer of a phosphate group to glutamate to form L-glutamate 5-phosphate. In Azoarcus sp. (strain BH72), this protein is Glutamate 5-kinase.